The chain runs to 373 residues: Integrator complex subunit 15 (373 aa).

It belongs to the Integrator subunit 15 family. As to quaternary structure, belongs to the multiprotein complex Integrator, at least composed of IntS1, IntS2, IntS3, IntS4, omd/IntS5, IntS6, defl/IntS7, IntS8, IntS9, IntS10, IntS11, IntS12, asun/IntS13, IntS14 and IntS15. The core complex associates with protein phosphatase 2A subunits mts/PP2A and Pp2A-29B, to form the Integrator-PP2A (INTAC) complex.

It is found in the nucleus. Functionally, component of the integrator complex, a multiprotein complex that terminates RNA polymerase II (Pol II) transcription in the promoter-proximal region of genes. The integrator complex provides a quality checkpoint during transcription elongation by driving premature transcription termination of transcripts that are unfavorably configured for transcriptional elongation: the complex terminates transcription by (1) catalyzing dephosphorylation of the C-terminal domain (CTD) of Pol II subunit Rbp1 and Spt5, and (2) degrading the exiting nascent RNA transcript via endonuclease activity. The integrator complex is also involved in the 3'-end processing of the U7 snRNA, and also the spliceosomal snRNAs U1, U2, U4 and U5. The chain is Integrator complex subunit 15 from Drosophila melanogaster (Fruit fly).